The following is a 190-amino-acid chain: Proline-rich protein 3 (190 aa).

Disordered regions lie at residues 1–94 (MPKR…GLGP), 110–130 (PPFP…KEAR), and 142–161 (KNTY…SDRP). Pro residues predominate over residues 37–48 (MGPPSLLGPPPM). A C3H1-type zinc finger spans residues 157–185 (KSDRPVCRHFSKKGHCRYEDHCAFYHPGV).

This Mus musculus (Mouse) protein is Proline-rich protein 3 (Prr3).